The sequence spans 385 residues: DNA replication and repair protein RecF (385 aa).

Residue 30-37 coordinates ATP; that stretch reads GSNGFGKT.

The protein belongs to the RecF family.

The protein resides in the cytoplasm. The RecF protein is involved in DNA metabolism; it is required for DNA replication and normal SOS inducibility. RecF binds preferentially to single-stranded, linear DNA. It also seems to bind ATP. This chain is DNA replication and repair protein RecF, found in Mycobacterium avium (strain 104).